A 158-amino-acid polypeptide reads, in one-letter code: Transcription elongation factor GreA (158 aa).

A coiled-coil region spans residues 46-66 (AEYEAAKERQGFIEGRISELE).

It belongs to the GreA/GreB family.

In terms of biological role, necessary for efficient RNA polymerase transcription elongation past template-encoded arresting sites. The arresting sites in DNA have the property of trapping a certain fraction of elongating RNA polymerases that pass through, resulting in locked ternary complexes. Cleavage of the nascent transcript by cleavage factors such as GreA or GreB allows the resumption of elongation from the new 3'terminus. GreA releases sequences of 2 to 3 nucleotides. This is Transcription elongation factor GreA from Neisseria meningitidis serogroup A / serotype 4A (strain DSM 15465 / Z2491).